Here is a 145-residue protein sequence, read N- to C-terminus: Putative antiporter subunit mnhG2 (145 aa).

A run of 3 helical transmembrane segments spans residues 11–31, 51–71, and 72–92; these read IAAVMLLLGSFIALISAIGIV, VLLTLIGVLIYFIVNTGFFSV, and RLLLSLVFINLTSPVGMHLVA.

Belongs to the CPA3 antiporters (TC 2.A.63) subunit G family. May form a heterooligomeric complex that consists of seven subunits: mnhA2, mnhB2, mnhC2, mnhD2, mnhE2, mnhF2 and mnhG2.

Its subcellular location is the cell membrane. In Staphylococcus aureus (strain bovine RF122 / ET3-1), this protein is Putative antiporter subunit mnhG2 (mnhG2).